Reading from the N-terminus, the 323-residue chain is ComG operon protein 2 homolog (323 aa).

Helical transmembrane passes span 93 to 113 (YPLL…YFVL), 141 to 161 (LPWL…TYFV), 188 to 208 (VITC…LSIM), and 296 to 316 (IVFS…MLPV).

The protein belongs to the GSP F family.

It localises to the cell membrane. In terms of biological role, required for transformation and DNA binding. This chain is ComG operon protein 2 homolog (comGB), found in Halalkalibacterium halodurans (strain ATCC BAA-125 / DSM 18197 / FERM 7344 / JCM 9153 / C-125) (Bacillus halodurans).